The chain runs to 577 residues: Urease subunit alpha (577 aa).

Residues 136–577 (GAIDCHVHLI…LPMAQRYFLF (442 aa)) form the Urease domain. Ni(2+) is bound by residues histidine 141, histidine 143, and lysine 224. Lysine 224 carries the post-translational modification N6-carboxylysine. Histidine 226 contributes to the substrate binding site. Positions 253 and 279 each coordinate Ni(2+). Catalysis depends on histidine 327, which acts as the Proton donor. Aspartate 367 is a Ni(2+) binding site.

The protein belongs to the metallo-dependent hydrolases superfamily. Urease alpha subunit family. In terms of assembly, heterotrimer of UreA (gamma), UreB (beta) and UreC (alpha) subunits. Three heterotrimers associate to form the active enzyme. Ni cation serves as cofactor. In terms of processing, carboxylation allows a single lysine to coordinate two nickel ions.

It is found in the cytoplasm. It carries out the reaction urea + 2 H2O + H(+) = hydrogencarbonate + 2 NH4(+). It participates in nitrogen metabolism; urea degradation; CO(2) and NH(3) from urea (urease route): step 1/1. The polypeptide is Urease subunit alpha (Mycobacterium ulcerans (strain Agy99)).